The primary structure comprises 263 residues: Purine nucleoside phosphorylase SAR1163 (263 aa).

3 residues coordinate Zn(2+): His-79, Cys-124, and His-141.

The protein belongs to the purine nucleoside phosphorylase YfiH/LACC1 family. As to quaternary structure, homodimer. Requires Cu(2+) as cofactor. The cofactor is Zn(2+).

It carries out the reaction adenosine + phosphate = alpha-D-ribose 1-phosphate + adenine. It catalyses the reaction S-methyl-5'-thioadenosine + phosphate = 5-(methylsulfanyl)-alpha-D-ribose 1-phosphate + adenine. The catalysed reaction is inosine + phosphate = alpha-D-ribose 1-phosphate + hypoxanthine. The enzyme catalyses adenosine + H2O + H(+) = inosine + NH4(+). Its function is as follows. Purine nucleoside enzyme that catalyzes the phosphorolysis of adenosine and inosine nucleosides, yielding D-ribose 1-phosphate and the respective free bases, adenine and hypoxanthine. Also catalyzes the phosphorolysis of S-methyl-5'-thioadenosine into adenine and S-methyl-5-thio-alpha-D-ribose 1-phosphate. Also has adenosine deaminase activity. This is Purine nucleoside phosphorylase SAR1163 from Staphylococcus aureus (strain MRSA252).